Here is a 500-residue protein sequence, read N- to C-terminus: Centrosomal protein of 57 kDa (500 aa).

Residues 1–17 show a composition bias toward low complexity; it reads MAAASVSAASGSHLSNS. Disordered stretches follow at residues 1 to 34 and 43 to 62; these read MAAASVSAASGSHLSNSFAEPSRSNGSMVRHSSS and KPFLNSDLRRSPSKPTLAYP. The segment covering 18–34 has biased composition (polar residues); sequence FAEPSRSNGSMVRHSSS. A phosphoserine mark is found at Ser-53 and Ser-55. Residues 58–239 form a centrosome localization domain (CLD) region; that stretch reads TLAYPESNSR…KAAELQTGLE (182 aa). 2 coiled-coil regions span residues 63 to 242 and 392 to 492; these read ESNS…ETNR and ELKD…NSLQ. The segment at 277–491 is mediates interaction with microtubules; sequence GAQPHYRLCL…KDMQSIQNSL (215 aa). The span at 434–450 shows a compositional bias: basic and acidic residues; that stretch reads KKELKATKKTLDEERNS. Positions 434–472 are disordered; the sequence is KKELKATKKTLDEERNSSSRSGITGTTNKKDFMKLRPGE. Residues 451–460 show a composition bias toward polar residues; the sequence is SSRSGITGTT. The segment covering 461 to 471 has biased composition (basic and acidic residues); the sequence is NKKDFMKLRPG.

This sequence belongs to the translokin family. As to quaternary structure, homodimer and homooligomer. Interacts with microtubules. Interacts with FGF2 and RAP80. Does not interact with FGF1 or FGF2 isoform 24 kDa. In terms of tissue distribution, ubiquitous.

The protein resides in the nucleus. It localises to the cytoplasm. The protein localises to the cytoskeleton. Its subcellular location is the microtubule organizing center. It is found in the centrosome. In terms of biological role, centrosomal protein which may be required for microtubule attachment to centrosomes. May act by forming ring-like structures around microtubules. Mediates nuclear translocation and mitogenic activity of the internalized growth factor FGF2, but that of FGF1. This is Centrosomal protein of 57 kDa (CEP57) from Homo sapiens (Human).